Here is a 378-residue protein sequence, read N- to C-terminus: Erythronate-4-phosphate dehydrogenase (378 aa).

Residues S45 and T66 each contribute to the substrate site. NAD(+) contacts are provided by D142 and T169. Residue R202 is part of the active site. D226 is a binding site for NAD(+). Residue E231 is part of the active site. The active-site Proton donor is H248. Residue G251 coordinates NAD(+). Residue Y252 participates in substrate binding.

This sequence belongs to the D-isomer specific 2-hydroxyacid dehydrogenase family. PdxB subfamily. Homodimer.

The protein localises to the cytoplasm. It carries out the reaction 4-phospho-D-erythronate + NAD(+) = (R)-3-hydroxy-2-oxo-4-phosphooxybutanoate + NADH + H(+). Its pathway is cofactor biosynthesis; pyridoxine 5'-phosphate biosynthesis; pyridoxine 5'-phosphate from D-erythrose 4-phosphate: step 2/5. Its function is as follows. Catalyzes the oxidation of erythronate-4-phosphate to 3-hydroxy-2-oxo-4-phosphonooxybutanoate. The protein is Erythronate-4-phosphate dehydrogenase of Cellvibrio japonicus (strain Ueda107) (Pseudomonas fluorescens subsp. cellulosa).